Reading from the N-terminus, the 215-residue chain is Interleukin-12 subunit alpha (215 aa).

Residues M1 to A22 form the signal peptide. 3 disulfides stabilise this stretch: C33-C106, C60-C192, and C81-C119. A glycan (N-linked (GlcNAc...) asparagine) is linked at N89.

This sequence belongs to the IL-6 superfamily. As to quaternary structure, heterodimer with IL12B; disulfide-linked. This heterodimer is known as interleukin IL-12. Heterodimer with EBI3/IL27B; not disulfide-linked. This heterodimer is known as interleukin IL-35. Interacts with NBR1; this interaction promotes IL-12 secretion.

It is found in the secreted. Its function is as follows. Heterodimerizes with IL12B to form the IL-12 cytokine or with EBI3/IL27B to form the IL-35 cytokine. IL-12 is primarily produced by professional antigen-presenting cells (APCs) such as B-cells and dendritic cells (DCs) as well as macrophages and granulocytes and regulates T-cell and natural killer-cell responses, induces the production of interferon-gamma (IFN-gamma), favors the differentiation of T-helper 1 (Th1) cells and is an important link between innate resistance and adaptive immunity. Mechanistically, exerts its biological effects through a receptor composed of IL12R1 and IL12R2 subunits. Binding to the receptor results in the rapid tyrosine phosphorylation of a number of cellular substrates including the JAK family kinases TYK2 and JAK2. In turn, recruited STAT4 gets phosphorylated and translocates to the nucleus where it regulates cytokine/growth factor responsive genes. As part of IL-35, plays essential roles in maintaining the immune homeostasis of the liver microenvironment and also functions as an immune-suppressive cytokine. Mediates biological events through unconventional receptors composed of IL12RB2 and gp130/IL6ST heterodimers or homodimers. Signaling requires the transcription factors STAT1 and STAT4, which form a unique heterodimer that binds to distinct DNA sites. This chain is Interleukin-12 subunit alpha (Il12a), found in Mus musculus (Mouse).